Here is a 451-residue protein sequence, read N- to C-terminus: uncharacterized protein (451 aa).

A TRAM domain is found at 2–60 (NLKVKQKIPLKIKRMGINGEGIGFYQKTLVFVPGALKGEDIYCQITSIRRNFVEAKLLK). Cysteine 73, cysteine 79, cysteine 82, and cysteine 162 together coordinate [4Fe-4S] cluster. Residues glutamine 283, tyrosine 312, aspartate 333, and aspartate 381 each contribute to the S-adenosyl-L-methionine site. Cysteine 408 acts as the Nucleophile in catalysis.

Belongs to the class I-like SAM-binding methyltransferase superfamily. RNA M5U methyltransferase family.

This is an uncharacterized protein from Streptococcus pneumoniae serotype 4 (strain ATCC BAA-334 / TIGR4).